The primary structure comprises 343 residues: S-adenosylmethionine:tRNA ribosyltransferase-isomerase (343 aa).

Belongs to the QueA family. Monomer.

It localises to the cytoplasm. It carries out the reaction 7-aminomethyl-7-carbaguanosine(34) in tRNA + S-adenosyl-L-methionine = epoxyqueuosine(34) in tRNA + adenine + L-methionine + 2 H(+). Its pathway is tRNA modification; tRNA-queuosine biosynthesis. Transfers and isomerizes the ribose moiety from AdoMet to the 7-aminomethyl group of 7-deazaguanine (preQ1-tRNA) to give epoxyqueuosine (oQ-tRNA). The chain is S-adenosylmethionine:tRNA ribosyltransferase-isomerase from Coxiella burnetii (strain RSA 331 / Henzerling II).